A 188-amino-acid chain; its full sequence is UPF0398 protein ABC2016 (188 aa).

This sequence belongs to the UPF0398 family.

This chain is UPF0398 protein ABC2016, found in Shouchella clausii (strain KSM-K16) (Alkalihalobacillus clausii).